The chain runs to 692 residues: Aspartate--tRNA ligase, mitochondrial (692 aa).

The N-terminal 61 residues, 1 to 61 (MNRVILKDSK…RNFTNTINNN (61 aa)), are a transit peptide targeting the mitochondrion. Glu264 contributes to the L-aspartate binding site. The tract at residues 287-290 (QQYK) is aspartate. L-aspartate is bound at residue Arg309. ATP is bound by residues 309-311 (RDE) and Glu590. Residue Arg597 coordinates L-aspartate. 642–645 (GFDR) serves as a coordination point for ATP.

This sequence belongs to the class-II aminoacyl-tRNA synthetase family. Type 1 subfamily.

It is found in the mitochondrion matrix. The catalysed reaction is tRNA(Asp) + L-aspartate + ATP = L-aspartyl-tRNA(Asp) + AMP + diphosphate. This is Aspartate--tRNA ligase, mitochondrial (maspS) from Dictyostelium discoideum (Social amoeba).